Here is a 206-residue protein sequence, read N- to C-terminus: Shieldin complex subunit 1 (206 aa).

Composition is skewed to polar residues over residues Met-1–Ser-15, Arg-33–Phe-43, and Asp-60–Asn-69. Disordered regions lie at residues Met-1–Pro-21 and Arg-33–Asn-69.

In terms of assembly, component of the shieldin complex, consisting of SHLD1, SHLD2, SHLD3 and MAD2L2/REV7. Within the complex, SHLD2 forms a scaffold which interacts with a SHLD3-MAD2L2 subcomplex via its N-terminus, and with SHLD1 via its C-terminus. Interacts with ASTE1.

It localises to the chromosome. Component of the shieldin complex, which plays an important role in repair of DNA double-stranded breaks (DSBs). During G1 and S phase of the cell cycle, the complex functions downstream of TP53BP1 to promote non-homologous end joining (NHEJ) and suppress DNA end resection. Mediates various NHEJ-dependent processes including immunoglobulin class-switch recombination, and fusion of unprotected telomeres. The chain is Shieldin complex subunit 1 from Bos taurus (Bovine).